The sequence spans 743 residues: Envelope glycoprotein H (743 aa).

The first 23 residues, 1–23 (MRPGLPPYLTVFTVYLLSHLPSQ), serve as a signal peptide directing secretion. Over 24-720 (RYGADAASEA…VVDATDSRLL (697 aa)) the chain is Virion surface. 4 N-linked (GlcNAc...) asparagine; by host glycosylation sites follow: N56, N63, N68, and N193. Positions 218–281 (YLMDELRYVK…QTEKHELLVL (64 aa)) are interaction with gL. N642 and N701 each carry an N-linked (GlcNAc...) asparagine; by host glycan. Residues 721-741 (MMSVYALSAIIGIYLLYRMLK) traverse the membrane as a helical segment. Residues 742 to 743 (TC) are Intravirion-facing.

This sequence belongs to the herpesviridae glycoprotein H family. In terms of assembly, interacts with glycoprotein L (gL); this interaction is necessary for the correct processing and cell surface expression of gH. The heterodimer gH/gL seems to interact with gB trimers during fusion. Forms the envelope pentamer complex (PC) composed of gH, gL, UL128, UL130, and UL131A. The pentamer interacts with host NRP2. Forms the envelope trimer complex composed of gH, gL, and gO. The trimer interacts with host PDGFRA. The trimer also interacts with host EPHA2. Interacts with UL116. In terms of processing, N-glycosylated, O-glycosylated, and sialylated.

It is found in the virion membrane. The protein localises to the host cell membrane. The protein resides in the host endosome membrane. Its function is as follows. The heterodimer glycoprotein H-glycoprotein L is required for the fusion of viral and plasma membranes leading to virus entry into the host cell. Following initial binding to host receptor, membrane fusion is mediated by the fusion machinery composed of gB and the heterodimer gH/gL. May also be involved in the fusion between the virion envelope and the outer nuclear membrane during virion morphogenesis. In human cytomegalovirus, forms two distincts complexes to mediate viral entry, a trimer and a pentamer at the surface of the virion envelope. The gH-gL-gO trimer is required for infection in fibroblasts by interacting with host PDGFRA, and in glioblastoma cells by interacting with host EPHA2. The gH-gL-UL128-UL130-UL131A pentamer is essential for viral entry in epithelial, endothelial and myeloid cells via interaction with host NRP2. The chain is Envelope glycoprotein H from Human cytomegalovirus (strain AD169) (HHV-5).